A 179-amino-acid chain; its full sequence is Ribosome maturation factor RimM (179 aa).

In terms of domain architecture, PRC barrel spans 101 to 179 (EGEVYVHDLC…VELMHRWILE (79 aa)).

This sequence belongs to the RimM family. Binds ribosomal protein uS19.

The protein resides in the cytoplasm. Functionally, an accessory protein needed during the final step in the assembly of 30S ribosomal subunit, possibly for assembly of the head region. Essential for efficient processing of 16S rRNA. May be needed both before and after RbfA during the maturation of 16S rRNA. It has affinity for free ribosomal 30S subunits but not for 70S ribosomes. The chain is Ribosome maturation factor RimM from Treponema denticola (strain ATCC 35405 / DSM 14222 / CIP 103919 / JCM 8153 / KCTC 15104).